An 82-amino-acid polypeptide reads, in one-letter code: Costars family protein v1g158749 (82 aa).

The protein belongs to the costars family.

The sequence is that of Costars family protein v1g158749 from Nematostella vectensis (Starlet sea anemone).